We begin with the raw amino-acid sequence, 642 residues long: Influenza virus NS1A-binding protein (642 aa).

One can recognise a BTB domain in the interval 1–131; the sequence is MIPNGYLMFE…GDYLLSRMDV (131 aa). The BACK domain occupies 132-350; it reads TSCISYRNFA…MQQDELIEKP (219 aa). The tract at residues 164–368 is sufficient for AHR interaction and signaling; that stretch reads ISEEEEFLKL…SGLGTAEMNG (205 aa). Phosphoserine occurs at positions 246, 277, 322, 336, and 338. The disordered stretch occupies residues 257 to 281; that stretch reads KPPRENGHKQISSSSTGCLSSPNAT. The span at 265-281 shows a compositional bias: polar residues; the sequence is KQISSSSTGCLSSPNAT. Kelch repeat units follow at residues 384 to 421, 432 to 469, 481 to 518, 527 to 565, 575 to 612, and 622 to 642; these read TVECYNPHTDHWSFLAPMRTPRARFQMAVLMGQLYVVG, CGEMYDSNIDDWIPVPELRTNRCNAGVCALNGKLYIVG, NCDVFDPVTKLWTSCAPLNIRRHQSAVCELGGYLYIIG, NTVERYNPENNTWTLIAPMNVARRGAGVAVLNGKLFVCG, CVEMYDPTRNEWKMMGNMTSPRSNAGIATVGNTIYAVG, and TVEVYNLESNEWSPYTKIFQF.

The protein belongs to the BTB-kelch protein family. Homodimer; through the BTB domain. Interacts with AHR/Aryl hydrocarbon receptor. Interacts (via BACK domain) with pre-mRNA-binding protein HNRNPK; the interaction is direct. Interacts (via BACK domain) with splicing factor PTBP1; the interaction is direct. Interacts (via Kelch repeats) with RNA polymerase POLR2A (via C-terminal domain). Interacts (via BACK domain) with splicing factor SNRPA; the interaction is indirect. Interacts (via Kelch repeats) with splicing factor SART1. Interacts (via BACK domain) with ALYREF; the interaction is indirect and likely plays a role in mRNA nuclear export. Interacts (via Kelch repeats) with KLHL20 (via Kelch repeats); this interaction blocks the assembly of Cul3-KLHL20 complex. In terms of assembly, (Microbial infection) Interacts (via BACK domain) with influenza A virus non-structural protein 1 (NS1); the interaction is direct and bridges the interaction between NS1 and HNRNPK.

The protein localises to the cytoplasm. The protein resides in the cytoskeleton. It localises to the nucleus. It is found in the nucleoplasm. Functionally, involved in many cell functions, including pre-mRNA splicing, the aryl hydrocarbon receptor (AHR) pathway, F-actin organization and protein ubiquitination. Plays a role in the dynamic organization of the actin skeleton as a stabilizer of actin filaments by association with F-actin through Kelch repeats. Protects cells from cell death induced by actin destabilization. Functions as modifier of the AHR/Aryl hydrocarbon receptor pathway increasing the concentration of AHR available to activate transcription. In addition, functions as a negative regulator of BCR(KLHL20) E3 ubiquitin ligase complex to prevent ubiquitin-mediated proteolysis of PML and DAPK1, two tumor suppressors. Inhibits pre-mRNA splicing (in vitro). May play a role in mRNA nuclear export. (Microbial infection) Involved in the alternative splicing of influenza A virus M1 mRNA through interaction with HNRNPK, thereby facilitating the generation of viral M2 protein. The BTB and Kelch domains are required for splicing activity. Promotes export of viral M mRNA and RNP via its interaction with mRNA export factor ALYREF. The polypeptide is Influenza virus NS1A-binding protein (Homo sapiens (Human)).